Reading from the N-terminus, the 85-residue chain is RNA-binding protein Hfq (85 aa).

The 61-residue stretch at 11 to 71 (DTFLNHVRKS…ISTIMPGHPV (61 aa)) folds into the Sm domain.

Belongs to the Hfq family. In terms of assembly, homohexamer.

Its function is as follows. RNA chaperone that binds small regulatory RNA (sRNAs) and mRNAs to facilitate mRNA translational regulation in response to envelope stress, environmental stress and changes in metabolite concentrations. Also binds with high specificity to tRNAs. Seems to be involved in the regulation of NifA. The protein is RNA-binding protein Hfq of Azorhizobium caulinodans (strain ATCC 43989 / DSM 5975 / JCM 20966 / LMG 6465 / NBRC 14845 / NCIMB 13405 / ORS 571).